The sequence spans 101 residues: Protein S100-A7A (101 aa).

EF-hand domains follow at residues 13 to 48 (MIDM…SACD) and 50 to 85 (KGIH…IAAD). Positions 18, 28, and 38 each coordinate Zn(2+). The Ca(2+) site is built by D63 and N65. E66 lines the Zn(2+) pocket. Ca(2+)-binding residues include D67, K69, and E74. Residues H87 and H91 each contribute to the Zn(2+) site.

Belongs to the S-100 family. Overexpressed in psoriasis.

Its subcellular location is the cytoplasm. Functionally, may be involved in epidermal differentiation and inflammation and might therefore be important for the pathogenesis of psoriasis and other diseases. This chain is Protein S100-A7A (S100A7A), found in Homo sapiens (Human).